Here is a 379-residue protein sequence, read N- to C-terminus: Queuine tRNA-ribosyltransferase (379 aa).

Residue Asp-94 is the Proton acceptor of the active site. Substrate-binding positions include 94-98 (DSGGF), Asp-148, Gln-191, and Gly-218. Positions 249–255 (GVGSPDS) are RNA binding. Asp-268 (nucleophile) is an active-site residue. Residues 273-277 (TRIAR) form an RNA binding; important for wobble base 34 recognition region. Zn(2+) is bound by residues Cys-306, Cys-308, Cys-311, and His-337.

This sequence belongs to the queuine tRNA-ribosyltransferase family. In terms of assembly, homodimer. Within each dimer, one monomer is responsible for RNA recognition and catalysis, while the other monomer binds to the replacement base PreQ1. The cofactor is Zn(2+).

It carries out the reaction 7-aminomethyl-7-carbaguanine + guanosine(34) in tRNA = 7-aminomethyl-7-carbaguanosine(34) in tRNA + guanine. Its pathway is tRNA modification; tRNA-queuosine biosynthesis. Functionally, catalyzes the base-exchange of a guanine (G) residue with the queuine precursor 7-aminomethyl-7-deazaguanine (PreQ1) at position 34 (anticodon wobble position) in tRNAs with GU(N) anticodons (tRNA-Asp, -Asn, -His and -Tyr). Catalysis occurs through a double-displacement mechanism. The nucleophile active site attacks the C1' of nucleotide 34 to detach the guanine base from the RNA, forming a covalent enzyme-RNA intermediate. The proton acceptor active site deprotonates the incoming PreQ1, allowing a nucleophilic attack on the C1' of the ribose to form the product. After dissociation, two additional enzymatic reactions on the tRNA convert PreQ1 to queuine (Q), resulting in the hypermodified nucleoside queuosine (7-(((4,5-cis-dihydroxy-2-cyclopenten-1-yl)amino)methyl)-7-deazaguanosine). In Halalkalibacterium halodurans (strain ATCC BAA-125 / DSM 18197 / FERM 7344 / JCM 9153 / C-125) (Bacillus halodurans), this protein is Queuine tRNA-ribosyltransferase.